Consider the following 1118-residue polypeptide: Ubiquitin carboxyl-terminal hydrolase 8 (1118 aa).

In terms of domain architecture, MIT spans 33–116 (TKSYVHSALK…ESLKLRYEEA (84 aa)). 2 stretches are compositionally biased toward basic and acidic residues: residues 120-146 (KKLE…REDG) and 158-177 (LDSK…KCET). Positions 120 to 177 (KKLEEKDRQEEAQRLQQKRQETGREDGGTLAKGSLENVLDSKDKTQKSNGEKNEKCET) are disordered. Serine 160 is modified (phosphoserine). One can recognise a Rhodanese domain in the interval 195–313 (KNISLIIMDA…WLLCYPQYTT (119 aa)). A phosphoserine mark is found at serine 392 and serine 400. Residues 402-447 (KNVPQIDRTKKPAVKLPEEHRIKSESTNHEQQSPQSGKVIPDRSTK) are disordered. The SH3-binding motif lies at 405-413 (PQIDRTKKP). Basic and acidic residues predominate over residues 417-429 (LPEEHRIKSESTN). Position 452 is a phosphoserine (serine 452). Basic and acidic residues predominate over residues 475–573 (KNKQEKELRE…AKKSVEDRGK (99 aa)). Disordered stretches follow at residues 475-648 (KNKQ…GRIV) and 679-746 (YPPE…ENKP). Phosphothreonine is present on threonine 577. The segment covering 618–645 (TFREDTDDTERNKAQREPLTRARSEEMG) has biased composition (basic and acidic residues). Over residues 716–726 (SYSSPDITQAI) the composition is skewed to polar residues. 2 positions are modified to phosphoserine: serine 718 and serine 719. Residues 777 to 1109 (TGLRNLGNTC…AAYILFYTSL (333 aa)) enclose the USP domain. Cysteine 786 serves as the catalytic Nucleophile. A Phosphothreonine modification is found at threonine 945. The Proton acceptor role is filled by histidine 1067.

Belongs to the peptidase C19 family. Forms a ternary complex with RNF128 and OTUB1. Interacts (via C-terminal UCH catalytic domain) with OTUB1 isoform 1. Interacts with STAM2 (via SH3 domain). Interacts with DNAJB3, EGFR, EPS15, RASGRF1, RNF41, YWHAE, YWHAG and YWHAZ. Interacts with NBR1, RASGRF1, RNF41 and IST1. Associates with the ESCRT-0 complex and with microtubules. Interacts with BIRC6/bruce and KIF23/MKLP1. As to quaternary structure, (Microbial infection) Interacts with Zika virus non-structural protein 1. Post-translationally, phosphorylation of Ser-718 is essential for interaction with YWHAE and for cytosol localization. Undergoes dephosphorylation at Ser-718 in the M phase. Tyrosine-phosphorylated in its N-terminal half in an EGFR-dependent manner. In terms of processing, ubiquitinated. Inactive form is mostly monoubiquitinated, but polyubiquitination happens too. Ubiquitination is increased in EGF-stimulated cells. Ubiquitination of active form is undetectable, suggesting a possibility that USP8 deubiquitinates itself, thereby regulating its own function.

It is found in the cytoplasm. Its subcellular location is the nucleus. It localises to the endosome membrane. The protein localises to the cell membrane. It catalyses the reaction Thiol-dependent hydrolysis of ester, thioester, amide, peptide and isopeptide bonds formed by the C-terminal Gly of ubiquitin (a 76-residue protein attached to proteins as an intracellular targeting signal).. In terms of biological role, hydrolase that can remove conjugated ubiquitin from proteins and therefore plays an important regulatory role at the level of protein turnover by preventing degradation. Converts both 'Lys-48' an 'Lys-63'-linked ubiquitin chains. Catalytic activity is enhanced in the M phase. Involved in cell proliferation. Required to enter into S phase in response to serum stimulation. May regulate T-cell anergy mediated by RNF128 via the formation of a complex containing RNF128 and OTUB1. Probably regulates the stability of STAM2 and RASGRF1. Regulates endosomal ubiquitin dynamics, cargo sorting, membrane traffic at early endosomes, and maintenance of ESCRT-0 stability. The level of protein ubiquitination on endosomes is essential for maintaining the morphology of the organelle. Deubiquitinates EPS15 and controls tyrosine kinase stability. Removes conjugated ubiquitin from EGFR thus regulating EGFR degradation and downstream MAPK signaling. Involved in acrosome biogenesis through interaction with the spermatid ESCRT-0 complex and microtubules. Deubiquitinates BIRC6/bruce and KIF23/MKLP1. Deubiquitinates BACE1 which inhibits BACE1 lysosomal degradation and modulates BACE-mediated APP cleavage and amyloid-beta formation. The protein is Ubiquitin carboxyl-terminal hydrolase 8 of Homo sapiens (Human).